Consider the following 544-residue polypeptide: Ceramide glucosyltransferase (544 aa).

Residues 1 to 15 (MVQEELSLFRITTGY) lie on the Lumenal side of the membrane. A helical membrane pass occupies residues 16–36 (FFLLWYIIILVAAYSGFFEIL). Residues 37-427 (FNFRNRPILH…LATLIEPTTE (391 aa)) lie on the Cytoplasmic side of the membrane. Residue D109 is a short sequence motif, D1. A short sequence motif (D2) is located at residue D171. A short sequence motif (D3) is located at residue D364. Catalysis depends on D364, which acts as the Proton acceptor. Positions 404–408 (RRVRW) match the (Q/R)XXRW motif. The helical transmembrane segment at 428 to 448 (SIICGIYGTYAISTVFFGTWF) threads the bilayer. The Lumenal portion of the chain corresponds to 449–451 (NKY). A helical membrane pass occupies residues 452 to 472 (WFVMHMLIWMLTDYVQYHTLI). Over 473–501 (NHTLDVKNITYLPNWLNESIPPKQRNCLQ) the chain is Cytoplasmic. A helical membrane pass occupies residues 502–522 (WGYIWILRELLALPIWIIAMI). At 523 to 544 (GHEIDWRGRPFRIKKDLTAEEM) the chain is on the lumenal side.

This sequence belongs to the glycosyltransferase 2 family.

Its subcellular location is the golgi apparatus membrane. It carries out the reaction an N-acylsphing-4-enine + UDP-alpha-D-glucose = a beta-D-glucosyl-(1&lt;-&gt;1')-N-acylsphing-4-enine + UDP + H(+). The protein operates within lipid metabolism; sphingolipid metabolism. Its function is as follows. Catalyzes the final step in the biosynthesis of the membrane lipid glucosylceramide (GluCer), the transfer of glucose to ceramide. Glucosylceramides play important roles in growth, differentiation and pathogenicity. The sequence is that of Ceramide glucosyltransferase from Candida albicans (strain SC5314 / ATCC MYA-2876) (Yeast).